The sequence spans 191 residues: NADH-quinone oxidoreductase subunit B (191 aa).

Residues C52, C53, C118, and C148 each coordinate [4Fe-4S] cluster.

The protein belongs to the complex I 20 kDa subunit family. In terms of assembly, NDH-1 is composed of 14 different subunits. Subunits NuoB, C, D, E, F, and G constitute the peripheral sector of the complex. It depends on [4Fe-4S] cluster as a cofactor.

The protein localises to the cell inner membrane. It carries out the reaction a quinone + NADH + 5 H(+)(in) = a quinol + NAD(+) + 4 H(+)(out). In terms of biological role, NDH-1 shuttles electrons from NADH, via FMN and iron-sulfur (Fe-S) centers, to quinones in the respiratory chain. The immediate electron acceptor for the enzyme in this species is believed to be a menaquinone. Couples the redox reaction to proton translocation (for every two electrons transferred, four hydrogen ions are translocated across the cytoplasmic membrane), and thus conserves the redox energy in a proton gradient. The sequence is that of NADH-quinone oxidoreductase subunit B from Azobacteroides pseudotrichonymphae genomovar. CFP2.